A 166-amino-acid polypeptide reads, in one-letter code: Urease accessory protein UreE (166 aa).

It belongs to the UreE family.

The protein localises to the cytoplasm. In terms of biological role, involved in urease metallocenter assembly. Binds nickel. Probably functions as a nickel donor during metallocenter assembly. The chain is Urease accessory protein UreE from Pseudomonas savastanoi pv. phaseolicola (strain 1448A / Race 6) (Pseudomonas syringae pv. phaseolicola (strain 1448A / Race 6)).